Consider the following 80-residue polypeptide: Cell division protein ZapB (80 aa).

Residues 3-80 are a coiled coil; the sequence is LEILEQLEAK…GLLGKMDEVE (78 aa). A disordered region spans residues 41-60; it reads LEQANNGRSEVEQEAQRARD. The segment covering 49-60 has biased composition (basic and acidic residues); sequence SEVEQEAQRARD.

Belongs to the ZapB family. As to quaternary structure, homodimer. The ends of the coiled-coil dimer bind to each other, forming polymers. Interacts with FtsZ.

The protein resides in the cytoplasm. Its function is as follows. Non-essential, abundant cell division factor that is required for proper Z-ring formation. It is recruited early to the divisome by direct interaction with FtsZ, stimulating Z-ring assembly and thereby promoting cell division earlier in the cell cycle. Its recruitment to the Z-ring requires functional FtsA or ZipA. This Aliivibrio fischeri (strain ATCC 700601 / ES114) (Vibrio fischeri) protein is Cell division protein ZapB.